Reading from the N-terminus, the 1220-residue chain is MNHIYKLKSYGIGTDRRFYGVANKTLETPDFLDPVRESFDWFLHVGIPEAFDRIFPIVSANGKLEISFRRGSLRVEKPENEYLAIREAKIKGKTYSARVYVTLVKVHSEDGEMEEQEILLAEFPFMTQGGTFIINGFEKVVVSQLIRSPGVCFRENVRNQQADDLFNKVEIIPQLGSWMEIFHKVTGNQVDTVKFRIDKHKNIPLLSFLRAIGFTNETVRKYFGNSPELLESIRRHKLESLEENLELIYRIVRKDDRITEEGLKNLIPSIIFNERRYNLASTGRFMLNAKLNLVERISQTYLAEDLVSKKNKILFKKGTYITRQLALEIQEKFNNEEIPLSEIEGVDSTIYARQLEITRNENLWKRFYVAIVKVWPNKKSMLQESEPVNVIATDPNLNEKTLVLSDIIAIVSYYFNLLSNLGKSDDPDSLVNKRIVSVGELLQNQFLIALTKIEKNSKEKISTKSDLSQLTVKSIINNKPIYNQFKNFFNSSKLSQFMDQINPLGEMASKRKVTSLGPGGLNRDTAQFEVRDVHTTHYGRICPVETPEGQNIGLILNFSVFSRINQYGFIITPYYQVKNRIVDYSKVHWLAASEEFDKSFAQSGVEIDQNNRIIPDKLTVRKNQTYLVLDAEQVNYIDVSSMQMTSISASAIPFLENNDANRALMGSNMQRQAVPLIKSEAPLVATGIEEAVARFSATNLRAAISGKVTYVDAKKIIIDDGEKPEIHYLRYFEKSNQETLILQKPTVKVGDKVKKGQLICDGPSTDNGELALGKNVLVAFSTWYGYNYEDAIIISEKLVKDDVFTSIHIQEQTIKFRSTKAGNDILTAEIPNASAKSRLHLDANGIVIVGSEVDTGDILVGRTSPKGEDNPTAEEKLMAAIWGKKALAQKDTSLRVKNGEGGTVIDVQILSRDQGDNLEEGVGMLIKILIAQKRKIKVGDKMAGRHGNKGVVSVILPVEDMPFLEDGTPVDIVLNPQGVPSRMNIGQVLELHLGMVAKKLKTKFVTPVFDGIKIETIKKLFDEANIPESGKFKLFDGISGQAFENPVSVGYMYMLKLLHMVDDKMHARSIGPYSLTTQQPLGGKSQNGGQRFGEMETWALESFGATSVLSELLTYKSDNIQGRNLLYNNIISGGKIPSPGTPESFNVLAYELRGLLIKLEVHKNDQENQEGEEIKDPLELPEIPSNFIDEYNQDGRIELNKLEEFADFDEENIDFDKLTR.

Belongs to the RNA polymerase beta chain family. In terms of assembly, the RNAP catalytic core consists of 2 alpha, 1 beta, 1 beta' and 1 omega subunit. When a sigma factor is associated with the core the holoenzyme is formed, which can initiate transcription.

The catalysed reaction is RNA(n) + a ribonucleoside 5'-triphosphate = RNA(n+1) + diphosphate. DNA-dependent RNA polymerase catalyzes the transcription of DNA into RNA using the four ribonucleoside triphosphates as substrates. The chain is DNA-directed RNA polymerase subunit beta from Mesomycoplasma hyopneumoniae (strain 232) (Mycoplasma hyopneumoniae).